The sequence spans 2412 residues: Genome polyprotein 1 (2412 aa).

The segment at 1 to 23 is disordered; sequence MEQTLAQAVSRRGKTNTPMAEER. In terms of domain architecture, Helicase ATP-binding spans 474 to 632; the sequence is AMADANNCWS…AARKYPLHVE (159 aa). 487-494 contributes to the ATP binding site; the sequence is GHTGSGKS. Positions 647–813 constitute a Helicase C-terminal domain; that stretch reads GGGDLLDISK…NVPFYMNETF (167 aa). The residue at position 1234 (Tyr1234) is an O-(5'-phospho-RNA)-tyrosine. Positions 1359-1574 constitute a Peptidase C4 domain; sequence ISFGASTGIL…CGYSSHNALF (216 aa). Active-site for nuclear inclusion protein A activity residues include His1404, Asp1440, and Cys1507. The RdRp catalytic domain occupies 1858–1982; it reads WLHGSGDGSR…AISPQFDEEF (125 aa). The tract at residues 2178 to 2202 is disordered; that stretch reads PTEDDGKLKTPSGARIPSSAADGNW.

The protein belongs to the bymoviruses polyprotein 1 family. Post-translationally, VPg is uridylylated by the polymerase and is covalently attached to the 5'-end of the genomic RNA. This uridylylated form acts as a nucleotide-peptide primer for the polymerase. In terms of processing, the viral RNA1 of bymoviruses is expressed as a single polyprotein which undergoes post-translational proteolytic processing by the main proteinase NIa-pro resulting in the production of at least eight individual proteins.

It localises to the host cytoplasmic vesicle. The protein localises to the virion. It catalyses the reaction RNA(n) + a ribonucleoside 5'-triphosphate = RNA(n+1) + diphosphate. The catalysed reaction is Hydrolyzes glutaminyl bonds, and activity is further restricted by preferences for the amino acids in P6 - P1' that vary with the species of potyvirus, e.g. Glu-Xaa-Xaa-Tyr-Xaa-Gln-|-(Ser or Gly) for the enzyme from tobacco etch virus. The natural substrate is the viral polyprotein, but other proteins and oligopeptides containing the appropriate consensus sequence are also cleaved.. In terms of biological role, indispensable for virus replication. Functionally, mediates the cap-independent, EIF4E-dependent translation of viral genomic RNAs. Binds to the cap-binding site of host EIF4E and thus interferes with the host EIF4E-dependent mRNA export and translation. VPg-RNA directly binds EIF4E and is a template for transcription. Also forms trimeric complexes with EIF4E-EIF4G, which are templates for translation. Its function is as follows. Has RNA-binding and proteolytic activities. An RNA-dependent RNA polymerase that plays an essential role in the virus replication. This Hordeum vulgare (Barley) protein is Genome polyprotein 1.